The primary structure comprises 142 residues: Small ribosomal subunit protein uS9 (142 aa).

Positions 117-142 (KGDPRRTEHKKPGIKHARSKRQKAYR) are disordered. A compositionally biased stretch (basic residues) spans 123-142 (TEHKKPGIKHARSKRQKAYR).

Belongs to the universal ribosomal protein uS9 family.

This is Small ribosomal subunit protein uS9 from Pyrobaculum aerophilum (strain ATCC 51768 / DSM 7523 / JCM 9630 / CIP 104966 / NBRC 100827 / IM2).